The sequence spans 371 residues: Cytochrome b (371 aa).

The next 4 helical transmembrane spans lie at 25–45, 69–90, 105–125, and 170–190; these read FGSMLLTCLMLQVLTGFFLAI, WIMQNTHAIGASLFFICIYIHI, WLSGVTLLMTLMATAFFGYVL, and FFALHFILPFIIISLSSIHII. Heme b-binding residues include His75 and His89. Residues His174 and His188 each coordinate heme b. His193 is a binding site for a ubiquinone. 4 helical membrane-spanning segments follow: residues 218 to 238, 280 to 300, 312 to 332, and 339 to 358; these read YKDLMTTTSMIILLFIILSFS, LGGTLALLMSILILTLPPFTH, LSQTLFWTLIATFVMITWTAT, and FITISQLTSIFYFSFFIMNP.

The protein belongs to the cytochrome b family. The cytochrome bc1 complex contains 3 respiratory subunits (MT-CYB, CYC1 and UQCRFS1), 2 core proteins (UQCRC1 and UQCRC2) and probably 6 low-molecular weight proteins. The cofactor is heme b.

The protein localises to the mitochondrion inner membrane. Functionally, component of the ubiquinol-cytochrome c reductase complex (complex III or cytochrome b-c1 complex) that is part of the mitochondrial respiratory chain. The b-c1 complex mediates electron transfer from ubiquinol to cytochrome c. Contributes to the generation of a proton gradient across the mitochondrial membrane that is then used for ATP synthesis. The chain is Cytochrome b (MT-CYB) from Micrurus fulvius (Eastern coral snake).